A 98-amino-acid polypeptide reads, in one-letter code: Cytochrome c-552 (98 aa).

The first 18 residues, Met1–Ala18, serve as a signal peptide directing secretion. Residues Cys28, Cys31, His32, and Met77 each contribute to the heme c site.

This sequence belongs to the cytochrome c family. Post-translationally, binds 1 heme c group covalently per subunit.

Functionally, reacts with hydrogenase. The polypeptide is Cytochrome c-552 (Hydrogenobacter thermophilus (strain DSM 6534 / IAM 12695 / TK-6)).